The following is an 80-amino-acid chain: Putative membrane protein insertion efficiency factor (80 aa).

It belongs to the UPF0161 family.

It is found in the cell inner membrane. Its function is as follows. Could be involved in insertion of integral membrane proteins into the membrane. The sequence is that of Putative membrane protein insertion efficiency factor from Syntrophobacter fumaroxidans (strain DSM 10017 / MPOB).